A 404-amino-acid chain; its full sequence is S-adenosylmethionine synthase (404 aa).

His-17 serves as a coordination point for ATP. Asp-19 contacts Mg(2+). Glu-45 serves as a coordination point for K(+). 2 residues coordinate L-methionine: Glu-58 and Gln-101. The segment at 101 to 111 (QSPDINRGVDR) is flexible loop. Residues 172 to 174 (DAK), 245 to 246 (RF), Asp-254, 260 to 261 (RK), Ala-277, and Lys-281 contribute to the ATP site. Residue Asp-254 coordinates L-methionine. Lys-285 contacts L-methionine.

Belongs to the AdoMet synthase family. Homotetramer; dimer of dimers. Mg(2+) serves as cofactor. K(+) is required as a cofactor.

It is found in the cytoplasm. It catalyses the reaction L-methionine + ATP + H2O = S-adenosyl-L-methionine + phosphate + diphosphate. It functions in the pathway amino-acid biosynthesis; S-adenosyl-L-methionine biosynthesis; S-adenosyl-L-methionine from L-methionine: step 1/1. Catalyzes the formation of S-adenosylmethionine (AdoMet) from methionine and ATP. The overall synthetic reaction is composed of two sequential steps, AdoMet formation and the subsequent tripolyphosphate hydrolysis which occurs prior to release of AdoMet from the enzyme. In Pelodictyon phaeoclathratiforme (strain DSM 5477 / BU-1), this protein is S-adenosylmethionine synthase.